A 278-amino-acid polypeptide reads, in one-letter code: Protein MGF 505-3R (278 aa).

It belongs to the asfivirus MGF 505 family.

Plays a role in virus cell tropism, and may be required for efficient virus replication in macrophages. The polypeptide is Protein MGF 505-3R (African swine fever virus (isolate Tick/Malawi/Lil 20-1/1983) (ASFV)).